The primary structure comprises 1020 residues: LLGL scribble cell polarity complex component 2 (1020 aa).

WD repeat units follow at residues 36-69, 76-117, 132-169, 193-227, 233-268, 282-324, 332-366, 388-464, 508-583, 592-653, 713-769, 778-830, 835-888, and 902-925; these read SALGYSPSLRILAIGTRSGAIKLYGAPGVEFMGL, VTQI…DESF, ITVVLPHSSCELLYLGTESGNVFVVQLPAFRALEDRTI, ALQEHPRDPNQILIGYSRGLVVIWDLQGSRVLYHF, LENIWWQRDGRLLVSCHSDGSYCQWPVSSEAQQPEP, AITR…GQQT, VIGFTVLTEADPAATFDDPYALVVLAEEELVVIDL, TCSH…YKLS, QKIF…FVLV, TSLA…LRQS, VRTL…KEIQ, GILV…VSAK, LTAL…VRYS, and VFTKYGQGFYLISPSEFERFSLST. S653 carries the post-translational modification Phosphoserine. Residues 653–669 show a composition bias toward basic residues; that stretch reads SFRRMRRSRVSSRKRHP. The interval 653–689 is disordered; sequence SFRRMRRSRVSSRKRHPAGPPGEAQEGSAKAERPGLQ. Disordered regions lie at residues 938 to 975 and 992 to 1020; these read AETKNHRPGNGAGPKKAPSRARNSGTQSDGEEKQPGLV and STLEGDRGSGNWRSHRAAVGCSLSNGGAE. S965 and S1015 each carry phosphoserine.

Belongs to the WD repeat L(2)GL family. As to quaternary structure, interacts with GPSM2/LGN, PRKCI/aPKC and PARD6B/Par-6. The complex is enhanced during mitosis. Interacts with DCAF1. In terms of processing, phosphorylated at Ser-653 by PRKCI. Phosphorylation is enhanced during cell polarization induced by calcium. Phosphorylation may occur during the cell-cell contact-induced cell polarization and may contribute to the segregation of LLGL2 from the PRKCI/aPKC and PARD6B/Par-6 complex.

The protein resides in the cytoplasm. Its function is as follows. Part of a complex with GPSM2/LGN, PRKCI/aPKC and PARD6B/Par-6, which may ensure the correct organization and orientation of bipolar spindles for normal cell division. This complex plays roles in the initial phase of the establishment of epithelial cell polarity. The chain is LLGL scribble cell polarity complex component 2 (LLGL2) from Homo sapiens (Human).